Here is a 52-residue protein sequence, read N- to C-terminus: MRSAILLVIVAIVAILGFLGVNAEPLPSPLAEPNPHAKAAPLSPAAMASLAG.

The first 23 residues, 1–23, serve as a signal peptide directing secretion; it reads MRSAILLVIVAIVAILGFLGVNA. 3 AXPX repeats span residues 23-26, 31-34, and 39-42; these read AEPL, AEPN, and AAPL. The propeptide occupies 24–41; sequence EPLPSPLAEPNPHAKAAP. The tract at residues 30-52 is disordered; the sequence is LAEPNPHAKAAPLSPAAMASLAG. A compositionally biased stretch (low complexity) spans 37–52; the sequence is AKAAPLSPAAMASLAG. Residue Ala-51 is modified to Alanine amide.

In terms of tissue distribution, expressed by the venom gland.

It localises to the secreted. This Eumenes pomiformis (Potter wasp) protein is Venom peptide 4b.